A 60-amino-acid chain; its full sequence is Cytochrome c oxidase subunit 9, mitochondrial (60 aa).

Over Met1–Ile15 the chain is Mitochondrial matrix. The chain crosses the membrane as a helical span at residues Ile16–His38. The Mitochondrial intermembrane segment spans residues Lys39–Lys57. A propeptide spans Ala58–Asn60 (removed in mature form).

This sequence belongs to the fungal cytochrome c oxidase subunit 7a family. In terms of assembly, component of the cytochrome c oxidase (complex IV, CIV), a multisubunit enzyme composed of a catalytic core of 3 subunits and several supernumerary subunits. The complex exists as a monomer or a dimer and forms supercomplexes (SCs) in the inner mitochondrial membrane with ubiquinol-cytochrome c oxidoreductase (cytochrome b-c1 complex, complex III, CIII).

It localises to the mitochondrion inner membrane. It participates in energy metabolism; oxidative phosphorylation. Component of the cytochrome c oxidase, the last enzyme in the mitochondrial electron transport chain which drives oxidative phosphorylation. The respiratory chain contains 3 multisubunit complexes succinate dehydrogenase (complex II, CII), ubiquinol-cytochrome c oxidoreductase (cytochrome b-c1 complex, complex III, CIII) and cytochrome c oxidase (complex IV, CIV), that cooperate to transfer electrons derived from NADH and succinate to molecular oxygen, creating an electrochemical gradient over the inner membrane that drives transmembrane transport and the ATP synthase. Cytochrome c oxidase is the component of the respiratory chain that catalyzes the reduction of oxygen to water. Electrons originating from reduced cytochrome c in the intermembrane space (IMS) are transferred via the dinuclear copper A center (CU(A)) of subunit 2 and heme A of subunit 1 to the active site in subunit 1, a binuclear center (BNC) formed by heme A3 and copper B (CU(B)). The BNC reduces molecular oxygen to 2 water molecules using 4 electrons from cytochrome c in the IMS and 4 protons from the mitochondrial matrix. This Candida glabrata (strain ATCC 2001 / BCRC 20586 / JCM 3761 / NBRC 0622 / NRRL Y-65 / CBS 138) (Yeast) protein is Cytochrome c oxidase subunit 9, mitochondrial (COX9).